We begin with the raw amino-acid sequence, 145 residues long: Synaptojanin-2-binding protein (145 aa).

Residues 1 to 117 are Cytoplasmic-facing; that stretch reads MNGRVDYLVT…VHRGEGEPSG (117 aa). Positions 13-100 constitute a PDZ domain; the sequence is EINLTRGPSG…AVSLRVQHRL (88 aa). Residues 118 to 138 form a helical; Anchor for type IV membrane protein membrane-spanning segment; the sequence is VPVAMVLLPVFALTMVAVWAF. Topologically, residues 139 to 145 are mitochondrial intermembrane; it reads VRYRKQL.

As to quaternary structure, binds (via the PDZ domain) to isoform 2A of SYNJ2 (via the unique motif in the C-terminus). Interacts (via C-terminus) with RALBP1. Interacts (via PDZ domain) with ACVR2A (via C-terminus) and ACVR2B (via C-terminus). Forms a ternary complex with ACVR2A and RALBP1. Interacts with MAPK12. Interacts with DLL1; enhances DLL1 protein stability, and promotes notch signaling in endothelial cells. As to expression, isoform 1 and isoform 2 are widely expressed, notably in brain, heart, lung, liver, kidney, skeletal muscle, ovary and testis. Isoform 3 is detected only in heart, spleen and testis.

The protein localises to the mitochondrion outer membrane. Its subcellular location is the cytoplasm. The protein resides in the perinuclear region. Isoform 1 regulates endocytosis of activin type 2 receptor kinases through the Ral/RALBP1-dependent pathway and may be involved in suppression of activin-induced signal transduction. Isoform 2 and isoform 3 show a stimulatory affect on activin-induced signal transduction and enhance activin type 2 expression at the cell surface. This chain is Synaptojanin-2-binding protein, found in Mus musculus (Mouse).